The primary structure comprises 145 residues: uncharacterized protein (145 aa).

The disordered stretch occupies residues 62 to 145 (LPSVGGRMTA…QLPQQGGCPG (84 aa)). A compositionally biased stretch (pro residues) spans 84–95 (ASSPEDPPLPHP).

This is an uncharacterized protein from Homo sapiens (Human).